The primary structure comprises 662 residues: Chromosomal replication initiator protein DnaA (662 aa).

The domain I, interacts with DnaA modulators stretch occupies residues 1 to 93 (MDDEQNVLAT…QVEGLGVRIA (93 aa)). The interval 93 to 322 (AAPATPTAER…STPAPANSSA (230 aa)) is domain II. Over residues 96–105 (ATPTAERAAA) the composition is skewed to low complexity. The segment at 96–294 (ATPTAERAAA…SDGPVERDDE (199 aa)) is disordered. Residues 114–123 (SRPERPRGER) show a composition bias toward basic and acidic residues. Positions 166 to 199 (PPAAEYTPAAEYTPAAEYTPAAEYSPEPEYTPAT) are enriched in low complexity. Basic and acidic residues-rich tracts occupy residues 236-248 (TPRR…RRDA) and 261-290 (PGDR…GPVE). Residues 323–539 (SLNAKYTFET…GALIRVTAFA (217 aa)) form a domain III, AAA+ region region. ATP-binding residues include glycine 367, glycine 369, lysine 370, and threonine 371. The domain IV, binds dsDNA stretch occupies residues 540-662 (SLNGQPLDLS…LTARIKQRSR (123 aa)).

The protein belongs to the DnaA family. As to quaternary structure, oligomerizes as a right-handed, spiral filament on DNA at oriC.

The protein localises to the cytoplasm. In terms of biological role, plays an essential role in the initiation and regulation of chromosomal replication. ATP-DnaA binds to the origin of replication (oriC) to initiate formation of the DNA replication initiation complex once per cell cycle. Binds the DnaA box (a 9 base pair repeat at the origin) and separates the double-stranded (ds)DNA. Forms a right-handed helical filament on oriC DNA; dsDNA binds to the exterior of the filament while single-stranded (ss)DNA is stabiized in the filament's interior. The ATP-DnaA-oriC complex binds and stabilizes one strand of the AT-rich DNA unwinding element (DUE), permitting loading of DNA polymerase. After initiation quickly degrades to an ADP-DnaA complex that is not apt for DNA replication. Binds acidic phospholipids. This is Chromosomal replication initiator protein DnaA from Nocardia farcinica (strain IFM 10152).